The following is a 261-amino-acid chain: Putative imidazole glycerol phosphate synthase subunit hisF2 (261 aa).

Asp138 is an active-site residue.

Belongs to the HisA/HisF family. As to quaternary structure, heterodimer of HisH and HisF.

The protein resides in the cytoplasm. The catalysed reaction is 5-[(5-phospho-1-deoxy-D-ribulos-1-ylimino)methylamino]-1-(5-phospho-beta-D-ribosyl)imidazole-4-carboxamide + L-glutamine = D-erythro-1-(imidazol-4-yl)glycerol 3-phosphate + 5-amino-1-(5-phospho-beta-D-ribosyl)imidazole-4-carboxamide + L-glutamate + H(+). It functions in the pathway amino-acid biosynthesis; L-histidine biosynthesis; L-histidine from 5-phospho-alpha-D-ribose 1-diphosphate: step 5/9. In terms of biological role, IGPS catalyzes the conversion of PRFAR and glutamine to IGP, AICAR and glutamate. The HisF subunit catalyzes the cyclization activity that produces IGP and AICAR from PRFAR using the ammonia provided by the HisH subunit. The chain is Putative imidazole glycerol phosphate synthase subunit hisF2 (hisF2) from Prochlorococcus marinus (strain MIT 9313).